The following is a 187-amino-acid chain: ADP-ribosylation factor-like protein 9 (187 aa).

GTP-binding positions include 25-32, 69-73, and 126-129; these read GLDGAGKT, EIGGS, and NKQD.

The protein belongs to the small GTPase superfamily. Arf family.

This chain is ADP-ribosylation factor-like protein 9 (ARL9), found in Homo sapiens (Human).